Consider the following 194-residue polypeptide: Dephospho-CoA kinase (194 aa).

Residues 3 to 194 (IVGLTGSIGM…RAIVDDLRAG (192 aa)) enclose the DPCK domain. 11 to 16 (GMGKST) contacts ATP.

It belongs to the CoaE family.

The protein resides in the cytoplasm. It carries out the reaction 3'-dephospho-CoA + ATP = ADP + CoA + H(+). It functions in the pathway cofactor biosynthesis; coenzyme A biosynthesis; CoA from (R)-pantothenate: step 5/5. Catalyzes the phosphorylation of the 3'-hydroxyl group of dephosphocoenzyme A to form coenzyme A. This Rhizobium meliloti (strain 1021) (Ensifer meliloti) protein is Dephospho-CoA kinase.